A 1043-amino-acid polypeptide reads, in one-letter code: Liprin-alpha-4 (1043 aa).

Coiled-coil stretches lie at residues 24–332 and 426–470; these read EKVR…GRGG and ILDA…RVTS. Positions 498–617 are disordered; sequence SASPPLSGRS…AKRKGIKSSI (120 aa). At Ser500 the chain carries Phosphoserine. Residues 505–516 are compositionally biased toward polar residues; it reads GRSTPKLTSRSA. The residue at position 541 (Ser541) is a Phosphoserine. Residues 544 to 555 are compositionally biased toward basic and acidic residues; that stretch reads SREENREDKATI. A compositionally biased stretch (low complexity) spans 590-602; that stretch reads QDSNPSSSNSSQD. 3 SAM domains span residues 688–754, 803–867, and 891–960; these read WDGP…MVSL, NHEW…LKRL, and WTND…LLAL. Residues 864–890 are a coiled coil; the sequence is LKRLNYDRKELEKRREESQHEIKDVLV.

This sequence belongs to the liprin family. Liprin-alpha subfamily. As to quaternary structure, forms homodimers and heterodimers with liprins-alpha and liprins-beta. Interacts with the second PTPase domain of PTPRD, PTPRF and PTPRS. Interacts with RIMS1 and RIMS2. Interacts with GIT1 and GIT2. Interacts with GRIP1. Interacts with KIF1A.

It is found in the cytoplasm. It localises to the cell surface. Its function is as follows. May regulate the disassembly of focal adhesions. May localize receptor-like tyrosine phosphatases type 2A at specific sites on the plasma membrane, possibly regulating their interaction with the extracellular environment and their association with substrates. The chain is Liprin-alpha-4 (Ppfia4) from Rattus norvegicus (Rat).